The primary structure comprises 276 residues: HUWE1-associated protein modifying stress responses 2 (276 aa).

Disordered regions lie at residues 146–182 (GKVPPTPQPPRTPRMSPRPPAAASTQAAATESGTPVG), 204–238 (ISMRSGPPGSSSQDGGIASSGRWKSSFLENDPNSL), and 252–276 (VRKRTSAQFGDGSADSPLHKRNRMV). Over residues 149-165 (PPTPQPPRTPRMSPRPP) the composition is skewed to pro residues. Composition is skewed to low complexity over residues 166–179 (AAASTQAAATESGT) and 208–219 (SGPPGSSSQDGG). Positions 252–276 (VRKRTSAQFGDGSADSPLHKRNRMV) are nuclear localization signal.

It belongs to the HAPSTR1 family. In terms of assembly, homooligomer. Heterooligomer with HAPSTR1; the interaction is direct and stabilizes HAPSTR1 independently of HUWE1. Interacts with HUWE1.

The protein localises to the nucleus. Together with HAPSTR1 plays a central regulatory role in the cellular response to molecular stressors, such as DNA damage, nutrient scarcity, and protein misfolding. Regulates these multiple stress response signaling pathways by stabilizing HAPSTR1, but also independently of HAPSTR1. This chain is HUWE1-associated protein modifying stress responses 2, found in Mus musculus (Mouse).